Reading from the N-terminus, the 178-residue chain is Ribosome maturation factor RimP (178 aa).

The protein belongs to the RimP family.

The protein localises to the cytoplasm. Required for maturation of 30S ribosomal subunits. This chain is Ribosome maturation factor RimP, found in Maricaulis maris (strain MCS10) (Caulobacter maris).